The following is a 354-amino-acid chain: Neutral protease 2 homolog BCIN_12g06300 (354 aa).

The N-terminal stretch at 1–19 (MRSFSKILAVASLAAIANS) is a signal peptide. Residues 20 to 179 (AVLKRDNNVL…PSSIDRRTVL (160 aa)) constitute a propeptide that is removed on maturation. Disulfide bonds link Cys-183/Cys-255 and Cys-262/Cys-280. Zn(2+) is bound at residue His-305. Glu-306 is a catalytic residue. Residues His-309 and Asp-320 each coordinate Zn(2+).

This sequence belongs to the peptidase M35 family. Zn(2+) is required as a cofactor.

Its subcellular location is the secreted. It carries out the reaction Preferential cleavage of bonds with hydrophobic residues in P1'. Also 3-Asn-|-Gln-4 and 8-Gly-|-Ser-9 bonds in insulin B chain.. Functionally, secreted metalloproteinase that allows assimilation of proteinaceous substrates. Shows high activities on basic nuclear substrates such as histone and protamine. The sequence is that of Neutral protease 2 homolog BCIN_12g06300 from Botryotinia fuckeliana (strain B05.10) (Noble rot fungus).